Reading from the N-terminus, the 448-residue chain is Ribosome biogenesis protein YTM1 (448 aa).

Residues 5-86 (TSNQAVVFST…EETLEIEYIE (82 aa)) are ubiquitin-like (UBL) domain. WD repeat units lie at residues 98 to 136 (PHES…TLDA), 191 to 230 (LHTA…KHEV), 271 to 309 (SHIG…CTRT), 312 to 351 (ASEK…ALSA), 357 to 397 (LHPA…AAIS), and 403 to 439 (DGTK…ETQG). Residues 225–261 (PPKHEVPEPTITAADQRTKKRRKVDPSSGDSSSPTAI) are disordered.

It belongs to the WD repeat WDR12/YTM1 family. As to quaternary structure, component of the NOP7 complex, composed of ERB1, NOP7 and YTM1. The complex is held together by ERB1, which interacts with NOP7 via its N-terminal domain and with YTM1 via a high-affinity interaction between the seven-bladed beta-propeller domains of the 2 proteins. The NOP7 complex associates with the 66S pre-ribosome. Interacts (via UBL domain) with MDN1 (via VWFA/MIDAS domain).

The protein localises to the nucleus. It is found in the nucleolus. The protein resides in the nucleoplasm. Component of the NOP7 complex, which is required for maturation of the 25S and 5.8S ribosomal RNAs and formation of the 60S ribosome. The polypeptide is Ribosome biogenesis protein YTM1 (Coprinopsis cinerea (strain Okayama-7 / 130 / ATCC MYA-4618 / FGSC 9003) (Inky cap fungus)).